Here is a 480-residue protein sequence, read N- to C-terminus: Adenosylhomocysteinase (480 aa).

The substrate site is built by T63, D142, and E203. Position 204–206 (204–206) interacts with NAD(+); that stretch reads TTT. 2 residues coordinate substrate: K233 and D237. Residues N238, 267–272, E290, N325, 346–348, and N394 each bind NAD(+); these read GYGDVG and IGH.

The protein belongs to the adenosylhomocysteinase family. Requires NAD(+) as cofactor.

The protein resides in the cytoplasm. The catalysed reaction is S-adenosyl-L-homocysteine + H2O = L-homocysteine + adenosine. Its pathway is amino-acid biosynthesis; L-homocysteine biosynthesis; L-homocysteine from S-adenosyl-L-homocysteine: step 1/1. Functionally, may play a key role in the regulation of the intracellular concentration of adenosylhomocysteine. The sequence is that of Adenosylhomocysteinase from Xanthomonas campestris pv. campestris (strain 8004).